The chain runs to 624 residues: MAIVSSVPLASKSCLHKSLISSIHKLKPFCRTIPTLGMSRPGKYVMPSMSMSSPVSDDGVQRRTGGYHSNLWNDDIIQFLSTTYGEPAYRERGERLIDEVKNMFNSISMEDVEFSPLNDLIQRLWIVDSVERLGIDRHFKNEIKSTLDYVYSYWTQKGIGCGIESVVPDLNSTALGLRTLRLHGYPVSAEVLKHFQNQNGQFACSPSETEGEMRSIVNLYRASLIAFPGEKVMEEAEIFSTKYLKEALQKIPVSSLSREIGDVLEQDWHTNLPRLEARNYIDVFGQDTKDTKLYMKTEKLLELAKLEFNIFQSLQKTELDSLLRWWKDSGFHHITFSRHLHVEYYTLASCIAIEPQHSRFRLGFAKACHVITILDDMYDVFGTIDELELFTAQIKRWDPSATDCLPKYMKRMYMILYDMVNEMSREAETAQGRDTLNYARQAWEDFIDSYMQEAKWIATGYLPTFDEYFENGKVSSGHRVAALQPILTMDIPFPHDILKEVDFPSKLNDLASAILRLRGDTRCYKADRARGEEASCISCYMKDNPGATEEDALSHINAVISDVIKGLNWELLNPNSSVPISSKKHVFDVSRALHYGYKYRDGYSVSNIETKSLVMRTLLESVPF.

The transit peptide at 1–48 directs the protein to the chloroplast; sequence MAIVSSVPLASKSCLHKSLISSIHKLKPFCRTIPTLGMSRPGKYVMPS. 3 residues coordinate Mg(2+): aspartate 375, aspartate 379, and aspartate 527. The DDXXD motif signature appears at 375–379; it reads DDMYD.

Belongs to the terpene synthase family. Tpsd subfamily. It depends on Mg(2+) as a cofactor. Mn(2+) serves as cofactor.

It is found in the plastid. Its subcellular location is the chloroplast. It carries out the reaction (2E)-geranyl diphosphate = (-)-beta-phellandrene + diphosphate. The protein operates within terpene metabolism; oleoresin biosynthesis. In terms of biological role, terpene synthase (TPS) involved in the biosynthesis of monoterpene natural products included in conifer oleoresin secretions and volatile emissions; these compounds contribute to biotic and abiotic stress defense against herbivores and pathogens. Catalyzes the conversion of (2E)-geranyl diphosphate (GPP) to (-)-beta-phellandrene. The polypeptide is (-)-beta-phellandrene synthase 2, chloroplastic (Picea sitchensis (Sitka spruce)).